A 251-amino-acid chain; its full sequence is Blue-light absorbing proteorhodopsin (251 aa).

The signal sequence occupies residues 1–18; that stretch reads MGKLLLILGSAIALPSFA. 7 helical membrane-spanning segments follow: residues 30-50, 65-85, 97-117, 120-140, 144-164, 190-210, and 223-243; these read VGVS…FFFV, VSGL…GVWI, IDWL…LAAC, VAAS…GAGF, AGLA…LYMI, MMMI…AGYL, and LIYN…IWNV. N6-(retinylidene)lysine is present on Lys233.

The protein belongs to the archaeal/bacterial/fungal opsin family. Post-translationally, contains one covalently linked retinal chromophore.

It is found in the cell membrane. Its function is as follows. Light-driven proton pump. May have a regulatory rather than energy harvesting function, based on light-induced opening of proton channels, to modulate cell physiology depending on light intensity variations. Could be, therefore, a sensory rhodopsin, potentially associated with a transducer component. The sequence is that of Blue-light absorbing proteorhodopsin from Gamma-proteobacterium Hot 75m4.